Here is a 1071-residue protein sequence, read N- to C-terminus: DNA-directed RNA polymerase subunit beta (1071 aa).

Belongs to the RNA polymerase beta chain family. In terms of assembly, in plastids the minimal PEP RNA polymerase catalytic core is composed of four subunits: alpha, beta, beta', and beta''. When a (nuclear-encoded) sigma factor is associated with the core the holoenzyme is formed, which can initiate transcription.

It localises to the plastid. The protein resides in the chloroplast. The enzyme catalyses RNA(n) + a ribonucleoside 5'-triphosphate = RNA(n+1) + diphosphate. Its function is as follows. DNA-dependent RNA polymerase catalyzes the transcription of DNA into RNA using the four ribonucleoside triphosphates as substrates. This chain is DNA-directed RNA polymerase subunit beta, found in Panax ginseng (Korean ginseng).